We begin with the raw amino-acid sequence, 315 residues long: Olfactory receptor 51L1 (315 aa).

Over 1–27 the chain is Extracellular; sequence MGDWNNSDAVEPIFILRGFPGLEYVHS. Asn5 carries N-linked (GlcNAc...) asparagine glycosylation. Residues 28–48 traverse the membrane as a helical segment; that stretch reads WLSILFCLAYLVAFMGNVTIL. Residues 49–56 lie on the Cytoplasmic side of the membrane; the sequence is SVIWIESS. A helical transmembrane segment spans residues 57 to 77; that stretch reads LHQPMYYFISILAVNDLGMSL. At 78–101 the chain is on the extracellular side; that stretch reads STLPTMLAVLWLDAPEIQASACYA. Residues Cys99 and Cys191 are joined by a disulfide bond. A helical membrane pass occupies residues 102–122; it reads QLFFIHTFTFLESSVLLAMAF. Residues 123–141 are Cytoplasmic-facing; that stretch reads DRFVAICHPLHYPTILTNS. A helical membrane pass occupies residues 142 to 162; it reads VIGKIGLACLLRSLGVVLPTP. Topologically, residues 163–198 are extracellular; the sequence is LLLRHYHYCHGNALSHAFCLHQDVLRLSCTDARTNS. The helical transmembrane segment at 199 to 219 threads the bilayer; it reads IYGLCVVIATLGVDSIFILLS. Over 220 to 239 the chain is Cytoplasmic; it reads YVLILNTVLDIASREEQLKA. The helical transmembrane segment at 240–260 threads the bilayer; the sequence is LNTCVSHICVVLIFFVPVIGV. Over 261–275 the chain is Extracellular; that stretch reads SMVHRFGKHLSPIVH. The helical transmembrane segment at 276–296 threads the bilayer; that stretch reads ILMADIYLLLPPVLNPIVYSV. Residues 297–315 lie on the Cytoplasmic side of the membrane; sequence RTKQIRLGILHKFVLRRRF.

Belongs to the G-protein coupled receptor 1 family.

Its subcellular location is the cell membrane. Odorant receptor. This chain is Olfactory receptor 51L1 (OR51L1), found in Homo sapiens (Human).